The sequence spans 242 residues: Ribonuclease PH (242 aa).

Phosphate is bound by residues Arg-89 and 127–129 (GTR).

This sequence belongs to the RNase PH family. In terms of assembly, homohexameric ring arranged as a trimer of dimers.

The enzyme catalyses tRNA(n+1) + phosphate = tRNA(n) + a ribonucleoside 5'-diphosphate. Phosphorolytic 3'-5' exoribonuclease that plays an important role in tRNA 3'-end maturation. Removes nucleotide residues following the 3'-CCA terminus of tRNAs; can also add nucleotides to the ends of RNA molecules by using nucleoside diphosphates as substrates, but this may not be physiologically important. Probably plays a role in initiation of 16S rRNA degradation (leading to ribosome degradation) during starvation. The protein is Ribonuclease PH of Neisseria meningitidis serogroup A / serotype 4A (strain DSM 15465 / Z2491).